A 395-amino-acid polypeptide reads, in one-letter code: Elongation factor Tu (395 aa).

The region spanning 10 to 204 is the tr-type G domain; it reads KPHVNIGTIG…AVDSYIPTPE (195 aa). Residues 19-26 are G1; sequence GHVDHGKT. 19-26 is a GTP binding site; that stretch reads GHVDHGKT. Thr-26 serves as a coordination point for Mg(2+). The interval 60 to 64 is G2; the sequence is GITIS. The tract at residues 81–84 is G3; it reads DCPG. Residues 81-85 and 136-139 contribute to the GTP site; these read DCPGH and NKCD. The G4 stretch occupies residues 136 to 139; it reads NKCD. Positions 174–176 are G5; the sequence is SAL.

It belongs to the TRAFAC class translation factor GTPase superfamily. Classic translation factor GTPase family. EF-Tu/EF-1A subfamily. Monomer. Post-translationally, phosphorylated on serine and/or threonine residue(s). Dephosphorylated by stp.

The protein localises to the cytoplasm. The catalysed reaction is GTP + H2O = GDP + phosphate + H(+). In terms of biological role, GTP hydrolase that promotes the GTP-dependent binding of aminoacyl-tRNA to the A-site of ribosomes during protein biosynthesis. This chain is Elongation factor Tu, found in Listeria innocua serovar 6a (strain ATCC BAA-680 / CLIP 11262).